Consider the following 262-residue polypeptide: Ornithine carbamoyltransferase (262 aa).

Residues 3–7 (STRTR), Gln-30, Arg-54, and 81–84 (HPTQ) each bind carbamoyl phosphate. Residues Asn-114, Asp-178, and 182–183 (SM) contribute to the L-ornithine site. Carbamoyl phosphate-binding positions include 219 to 222 (HCLP) and Thr-247.

It belongs to the aspartate/ornithine carbamoyltransferase superfamily. OTCase family.

The protein resides in the cytoplasm. The enzyme catalyses carbamoyl phosphate + L-ornithine = L-citrulline + phosphate + H(+). Its pathway is amino-acid biosynthesis; L-arginine biosynthesis; L-arginine from L-ornithine and carbamoyl phosphate: step 1/3. It participates in amino-acid degradation; L-arginine degradation via ADI pathway; carbamoyl phosphate from L-arginine: step 2/2. Reversibly catalyzes the transfer of the carbamoyl group from carbamoyl phosphate (CP) to the N(epsilon) atom of ornithine (ORN) to produce L-citrulline. This chain is Ornithine carbamoyltransferase (argF), found in Neisseria meningitidis.